The following is a 184-amino-acid chain: dITP/XTP pyrophosphatase (184 aa).

8–13 (TGNKGK) lines the substrate pocket. 2 residues coordinate Mg(2+): Glu-37 and Asp-66. The active-site Proton acceptor is Asp-66. Residues Ser-67, 142 to 145 (FGYD), Lys-163, and 168 to 169 (HR) contribute to the substrate site.

It belongs to the HAM1 NTPase family. In terms of assembly, homodimer. Mg(2+) serves as cofactor.

It catalyses the reaction XTP + H2O = XMP + diphosphate + H(+). The enzyme catalyses dITP + H2O = dIMP + diphosphate + H(+). The catalysed reaction is ITP + H2O = IMP + diphosphate + H(+). Functionally, pyrophosphatase that catalyzes the hydrolysis of nucleoside triphosphates to their monophosphate derivatives, with a high preference for the non-canonical purine nucleotides XTP (xanthosine triphosphate), dITP (deoxyinosine triphosphate) and ITP. Seems to function as a house-cleaning enzyme that removes non-canonical purine nucleotides from the nucleotide pool, thus preventing their incorporation into DNA/RNA and avoiding chromosomal lesions. The chain is dITP/XTP pyrophosphatase from Methanosarcina acetivorans (strain ATCC 35395 / DSM 2834 / JCM 12185 / C2A).